The following is a 106-amino-acid chain: Thiosulfate sulfurtransferase GlpE (106 aa).

The Rhodanese domain maps to 17-105 (EQNEARLVDI…SYRAELPVIA (89 aa)). Cys65 serves as the catalytic Cysteine persulfide intermediate.

This sequence belongs to the GlpE family.

The protein resides in the cytoplasm. The enzyme catalyses thiosulfate + hydrogen cyanide = thiocyanate + sulfite + 2 H(+). It catalyses the reaction thiosulfate + [thioredoxin]-dithiol = [thioredoxin]-disulfide + hydrogen sulfide + sulfite + 2 H(+). In terms of biological role, transferase that catalyzes the transfer of sulfur from thiosulfate to thiophilic acceptors such as cyanide or dithiols. May function in a CysM-independent thiosulfate assimilation pathway by catalyzing the conversion of thiosulfate to sulfite, which can then be used for L-cysteine biosynthesis. This is Thiosulfate sulfurtransferase GlpE from Vibrio atlanticus (strain LGP32) (Vibrio splendidus (strain Mel32)).